The following is a 403-amino-acid chain: 26S proteasome regulatory subunit 8 homolog (403 aa).

186-193 (GPPGTGKT) is a binding site for ATP.

Belongs to the AAA ATPase family.

The protein resides in the cytoplasm. The protein localises to the nucleus. Its function is as follows. The 26S proteasome is involved in the ATP-dependent degradation of ubiquitinated proteins. The regulatory (or ATPase) complex confers ATP dependency and substrate specificity to the 26S complex. The sequence is that of 26S proteasome regulatory subunit 8 homolog (let1) from Schizosaccharomyces pombe (strain 972 / ATCC 24843) (Fission yeast).